A 55-amino-acid chain; its full sequence is Large ribosomal subunit protein bL33 (55 aa).

The protein belongs to the bacterial ribosomal protein bL33 family.

The polypeptide is Large ribosomal subunit protein bL33 (Renibacterium salmoninarum (strain ATCC 33209 / DSM 20767 / JCM 11484 / NBRC 15589 / NCIMB 2235)).